The primary structure comprises 342 residues: Holliday junction branch migration complex subunit RuvB (342 aa).

Residues 1-185 (MTVKPLRDVT…FPIQERLEYY (185 aa)) form a large ATPase domain (RuvB-L) region. ATP is bound by residues L24, R25, G66, K69, T70, S71, 132–134 (EDY), R175, Y185, and R222. Position 70 (T70) interacts with Mg(2+). Residues 186-256 (GPAELKEIAV…VVDRTLRRLE (71 aa)) are small ATPAse domain (RuvB-S). The interval 259–342 (ARGLDAMDRR…RSGGKQGSLV (84 aa)) is head domain (RuvB-H). DNA contacts are provided by R314 and R319.

This sequence belongs to the RuvB family. Homohexamer. Forms an RuvA(8)-RuvB(12)-Holliday junction (HJ) complex. HJ DNA is sandwiched between 2 RuvA tetramers; dsDNA enters through RuvA and exits via RuvB. An RuvB hexamer assembles on each DNA strand where it exits the tetramer. Each RuvB hexamer is contacted by two RuvA subunits (via domain III) on 2 adjacent RuvB subunits; this complex drives branch migration. In the full resolvosome a probable DNA-RuvA(4)-RuvB(12)-RuvC(2) complex forms which resolves the HJ.

The protein resides in the cytoplasm. The enzyme catalyses ATP + H2O = ADP + phosphate + H(+). The RuvA-RuvB-RuvC complex processes Holliday junction (HJ) DNA during genetic recombination and DNA repair, while the RuvA-RuvB complex plays an important role in the rescue of blocked DNA replication forks via replication fork reversal (RFR). RuvA specifically binds to HJ cruciform DNA, conferring on it an open structure. The RuvB hexamer acts as an ATP-dependent pump, pulling dsDNA into and through the RuvAB complex. RuvB forms 2 homohexamers on either side of HJ DNA bound by 1 or 2 RuvA tetramers; 4 subunits per hexamer contact DNA at a time. Coordinated motions by a converter formed by DNA-disengaged RuvB subunits stimulates ATP hydrolysis and nucleotide exchange. Immobilization of the converter enables RuvB to convert the ATP-contained energy into a lever motion, pulling 2 nucleotides of DNA out of the RuvA tetramer per ATP hydrolyzed, thus driving DNA branch migration. The RuvB motors rotate together with the DNA substrate, which together with the progressing nucleotide cycle form the mechanistic basis for DNA recombination by continuous HJ branch migration. Branch migration allows RuvC to scan DNA until it finds its consensus sequence, where it cleaves and resolves cruciform DNA. In Anaeromyxobacter dehalogenans (strain 2CP-C), this protein is Holliday junction branch migration complex subunit RuvB.